The primary structure comprises 89 residues: uncharacterized protein (89 aa).

The chain crosses the membrane as a helical span at residues 67–86 (VYLSSMYICFILLAIWMTVW).

It localises to the membrane. This is an uncharacterized protein from Bacillus subtilis (strain 168).